The chain runs to 665 residues: RNA-directed RNA polymerase (665 aa).

Positions 310–485 (NKEEKVKEWS…LKEGKVNPSP (176 aa)) constitute a RdRp catalytic domain. 3 residues coordinate Mg(2+): D454, Y491, and G495.

Part of the packaging complex composed of RDRP, P4 and P7. Interacts with P7. Mg(2+) is required as a cofactor. Requires Mn(2+) as cofactor.

The protein resides in the virion. It carries out the reaction RNA(n) + a ribonucleoside 5'-triphosphate = RNA(n+1) + diphosphate. In terms of biological role, rna-dependent RNA polymerase part of the packaging complex that packages the viral RNA segments, replicate them into a double-stranded form and transcribe them. The chain is RNA-directed RNA polymerase (P2) from Pseudomonas phage phi6 (Bacteriophage phi-6).